The sequence spans 185 residues: Ribosome-recycling factor (185 aa).

Belongs to the RRF family.

Its subcellular location is the cytoplasm. In terms of biological role, responsible for the release of ribosomes from messenger RNA at the termination of protein biosynthesis. May increase the efficiency of translation by recycling ribosomes from one round of translation to another. This chain is Ribosome-recycling factor, found in Francisella tularensis subsp. holarctica (strain FTNF002-00 / FTA).